The following is a 108-amino-acid chain: Phosphoribosyl-ATP pyrophosphatase (108 aa).

Belongs to the PRA-PH family.

It is found in the cytoplasm. It carries out the reaction 1-(5-phospho-beta-D-ribosyl)-ATP + H2O = 1-(5-phospho-beta-D-ribosyl)-5'-AMP + diphosphate + H(+). Its pathway is amino-acid biosynthesis; L-histidine biosynthesis; L-histidine from 5-phospho-alpha-D-ribose 1-diphosphate: step 2/9. This chain is Phosphoribosyl-ATP pyrophosphatase, found in Geobacter sulfurreducens (strain ATCC 51573 / DSM 12127 / PCA).